The primary structure comprises 1250 residues: MARGDAGRGRGLLALTFCLLAARGELLLPQETTVELSCGVGPLQVILGPEQAAVLNCSLGAAAAGPPTRVTWSKDGDTLLEHDHLHLLPNGSLWLSQPLAPNGSDESVPEAVGVIEGNYSCLAHGPLGVLASQTAVVKLATLADFSLHPESQTVEENGTARFECHIEGLPAPIITWEKDQVTLPEEPRLIVLPNGVLQILDVQESDAGPYRCVATNSARQHFSQEALLSVAHRGSLASTRGQDVVIVAAPENTTVVSGQSVVMECVASADPTPFVSWVRQDGKPISTDVIVLGRTNLLIANAQPWHSGVYVCRANKPRTRDFATAAAELRVLAAPAITQAPEALSRTRASTARFVCRASGEPRPALRWLHNGAPLRPNGRVKVQGGGGSLVITQIGLQDAGYYQCVAENSAGMACAAASLAVVVREGLPSAPTRVTATPLSSSAVLVAWERPEMHSEQIIGFSLHYQKARGMDNVEYQFAVNNDTTELQVRDLEPNTDYEFYVVAYSQLGASRTSTPALVHTLDDVPSAAPQLSLSSPNPSDIRVAWLPLPPSLSNGQVVKYKIEYGLGKEDQIFSTEVRGNETQLMLNSLQPNKVYRVRISAGTAAGFGAPSQWMHHRTPSMHNQSHVPFAPAELKVQAKMESLVVSWQPPPHPTQISGYKLYWREVGAEEEANGDRLPGGRGDQAWDVGPVRLKKKVKQYELTQLVPGRLYEVKLVAFNKHEDGYAAVWKGKTEKAPAPDMPIQRGPPLPPAHVHAESNSSTSIWLRWKKPDFTTVKIVNYTVRFSPWGLRNASLVTYYTSSGEDILIGGLKPFTKYEFAVQSHGVDMDGPFGSVVERSTLPDRPSTPPSDLRLSPLTPSTVRLHWCPPTEPNGEIVEYLILYSSNHTQPEHQWTLLTTQGNIFSAEVHGLESDTRYFFKMGARTEVGPGPFSRLQDVITLQEKLSDSLDMHSVTGIIVGVCLGLLCLLACMCAGLRRSPHRESLPGLSSTATPGNPALYSRARLGPPSPPAAHELESLVHPHPQDWSPPPSDVEDRAEVHSLMGGGVSEGRSHSKRKISWAQPSGLSWAGSWAGCELPQAGPRPALTRALLPPAGTGQTLLLQALVYDAIKGNGRKKSPPACRNQVEAEVIVHSDFSASNGNPDLHLQDLEPEDPLPPEAPDLISGVGDPGQGAAWLDRELGGCELAAPGPDRLTCLPEAASASCSYPDLQPGEVLEETPGDSCQLKSPCPLGASPGLPRSPVSSSA.

An N-terminal signal peptide occupies residues 1–24 (MARGDAGRGRGLLALTFCLLAARG). The Extracellular segment spans residues 25 to 957 (ELLLPQETTV…SDSLDMHSVT (933 aa)). 4 consecutive Ig-like C2-type domains span residues 29 to 137 (PQET…TAVV), 143 to 229 (ADFS…ALLS), 242 to 330 (QDVV…AELR), and 335 to 421 (PAIT…ASLA). The cysteines at positions 57 and 121 are disulfide-linked. Asparagine 90, asparagine 102, and asparagine 157 each carry an N-linked (GlcNAc...) asparagine glycan. Cysteine 164 and cysteine 212 are oxidised to a cystine. Asparagine 252 carries N-linked (GlcNAc...) asparagine glycosylation. 2 disulfide bridges follow: cysteine 265–cysteine 312 and cysteine 356–cysteine 405. 5 Fibronectin type-III domains span residues 431–525 (APTR…TLDD), 527–623 (PSAA…TPSM), 632–741 (APAE…APAP), 752–845 (PPAH…TLPD), and 850–945 (PPSD…TLQE). Asparagine 582 carries an N-linked (GlcNAc...) asparagine glycan. A helical transmembrane segment spans residues 958-978 (GIIVGVCLGLLCLLACMCAGL). At 979 to 1250 (RRSPHRESLP…LPRSPVSSSA (272 aa)) the chain is on the cytoplasmic side. Residue threonine 995 is modified to Phosphothreonine. Disordered stretches follow at residues 1140–1175 (SASN…DPGQ) and 1215–1250 (PGEV…SSSA).

It belongs to the immunoglobulin superfamily. DCC family.

Its subcellular location is the cell membrane. This chain is Immunoglobulin superfamily DCC subclass member 4 (IGDCC4), found in Homo sapiens (Human).